The sequence spans 1427 residues: MAFRKENKIKSNFSKISIGLASPEEILENSSGEVLKPETINYRTYKPERDGLFCERIFGPIKDYECHCGKYKRIRYKGIVCDRCGVEVTEKKVRRERMGHIQLVVPVAHIWYFRSLPNKIGYLLGLPTKKLDSIIYYERYVVIQPGVKAEDGIAEFDLLSEEEYLDILDTLPKDNQYLEDTDPNKFIAKMGAEAIYDLLARLDLDALSYELRHRAGNDASQQRKNEALKRLQVVESFRASRGRNKPEWMIVRIVPVIPPELRPLVPLDGGRFATSDLNDLYRRVIIRNNRLKRLIEIKAPEVILRNEKRMLQESVDSLFDNSRKSSAVKTDANRPLKSLSDSLKGKQGRFRQNLLGKRVDYSARSVIVVGPELRMHECGIPKLMAAELYKPFIIRKLIERGIVKTVKSAKKIVDRKEPVIWDILEHVMKGHPVLLNRAPTLHRLGIQAFQPKMIEGKAIQLHPLACTAFNADFDGDQMAVHLPLSNEAVLEAQMLMLASHNILNPANGAPITVPSQDMVLGLYYITKLRKGAKGEGLTFYGPEEALIAYNEGKVDIHAPVKVIVKDLDENGNIVDVMRETSVGRVIVNEIVPPEVGYINTIISKKSLRDIISAVIKACGVARTADFLDGIKNLGYKMAFQGGLSFNLGDIIIPKEKETLVQRGYEEVEQVISNYNMGFITNNERYNQVIDIWTHVNSELSNILMKTISSDDQGFNSVYMMLDSGARGSKEQIRQLSGMRGLMAKPQKAGAEGGQIIENPILSNFKEGLSVLEYFISTHGARKGLADTALKTADAGYLTRRLVDVSHDVIINEEDCGTLRGLVCTDLKNNDEVIATLYERILGRVSVHDIIHPQTGELLVAGGEEITEDIAKKIQESPIESVEIRSVLTCESKKGVCAKCYGRNLATNHMVQKGEAVGVIAAQSIGEPGTQLTLRTFHAGGTAANIAANASIVAKNNARLEFEELRTVDIVDETGEAAKVVVGRLAEVRFIDVNTGIVLSTHNVPYGSTLYVADGEVVEKGKLIAKWDPFNAVIITEATGKIEFEGVIENVTYKIESDEATGLREIIIIESKDKTKVPSAHILTEDGDLIRTYNLPVGGHVVIENGQKVKAGEVIVKIPRAVGKAGDITGGLPRVTELFEARNPSNPAVVSEIDGEVTMGKVKRGNREIIVTSKTGEVKKYLVPLSKQILVQENDYVRAGTPLSDGATTPADILAIKGPTAVQEYIVNEVQDVYRLQGVKINDKHFEIIVRQMMRKVTIDEPGDTRFLEQQVVDKLEFMEENDRIWGKKVVVDAGDSENLKAGQIVTARKLRDENSMLKRRDLKPVEVRDAVAATSTQILQGITRAALQTSSFMSAASFQETTKVLNEAAINGKIDKLEGMKENVICGHLIPAGTGLREFDKIIVGSKEEYDRILANKKTVLDYNEVE.

Zn(2+) contacts are provided by cysteine 66, cysteine 68, cysteine 81, and cysteine 84. Mg(2+) contacts are provided by aspartate 472, aspartate 474, and aspartate 476. Zn(2+) is bound by residues cysteine 815, cysteine 889, cysteine 896, and cysteine 899.

The protein belongs to the RNA polymerase beta' chain family. In terms of assembly, the RNAP catalytic core consists of 2 alpha, 1 beta, 1 beta' and 1 omega subunit. When a sigma factor is associated with the core the holoenzyme is formed, which can initiate transcription. Mg(2+) is required as a cofactor. Zn(2+) serves as cofactor.

It catalyses the reaction RNA(n) + a ribonucleoside 5'-triphosphate = RNA(n+1) + diphosphate. DNA-dependent RNA polymerase catalyzes the transcription of DNA into RNA using the four ribonucleoside triphosphates as substrates. This chain is DNA-directed RNA polymerase subunit beta', found in Bacteroides fragilis (strain YCH46).